Reading from the N-terminus, the 257-residue chain is tRNA (guanine-N(7)-)-methyltransferase (257 aa).

Residues 1–12 (MARDSEDQDMET) show a composition bias toward acidic residues. Positions 1–25 (MARDSEDQDMETETNGAAEGLDPTS) are disordered. S-adenosyl-L-methionine is bound by residues Gly-80, 103-104 (EI), 138-139 (NA), and Leu-158. Residue Asp-161 is part of the active site. An S-adenosyl-L-methionine-binding site is contributed by 236-238 (SEE).

Belongs to the class I-like SAM-binding methyltransferase superfamily. TrmB family.

The protein resides in the nucleus. It catalyses the reaction guanosine(46) in tRNA + S-adenosyl-L-methionine = N(7)-methylguanosine(46) in tRNA + S-adenosyl-L-homocysteine. It functions in the pathway tRNA modification; N(7)-methylguanine-tRNA biosynthesis. Catalyzes the formation of N(7)-methylguanine at position 46 (m7G46) in tRNA. The protein is tRNA (guanine-N(7)-)-methyltransferase of Drosophila ananassae (Fruit fly).